The sequence spans 977 residues: MSRRPDLLRGSVVATVAATFLLFIFPPNVESTVEKQALFRFKNRLDDSHNILQSWKPSDSPCVFRGITCDPLSGEVIGISLGNVNLSGTISPSISALTKLSTLSLPSNFISGRIPPEIVNCKNLKVLNLTSNRLSGTIPNLSPLKSLEILDISGNFLNGEFQSWIGNMNQLVSLGLGNNHYEEGIIPESIGGLKKLTWLFLARSNLTGKIPNSIFDLNALDTFDIANNAISDDFPILISRLVNLTKIELFNNSLTGKIPPEIKNLTRLREFDISSNQLSGVLPEELGVLKELRVFHCHENNFTGEFPSGFGDLSHLTSLSIYRNNFSGEFPVNIGRFSPLDTVDISENEFTGPFPRFLCQNKKLQFLLALQNEFSGEIPRSYGECKSLLRLRINNNRLSGQVVEGFWSLPLAKMIDLSDNELTGEVSPQIGLSTELSQLILQNNRFSGKIPRELGRLTNIERIYLSNNNLSGEIPMEVGDLKELSSLHLENNSLTGFIPKELKNCVKLVDLNLAKNFLTGEIPNSLSQIASLNSLDFSGNRLTGEIPASLVKLKLSFIDLSGNQLSGRIPPDLLAVGGSTAFSRNEKLCVDKENAKTNQNLGLSICSGYQNVKRNSSLDGTLLFLALAIVVVVLVSGLFALRYRVVKIRELDSENRDINKADAKWKIASFHQMELDVDEICRLDEDHVIGSGSAGKVYRVDLKKGGGTVAVKWLKRGGGEEGDGTEVSVAEMEILGKIRHRNVLKLYACLVGRGSRYLVFEFMENGNLYQALGNNIKGGLPELDWLKRYKIAVGAAKGIAYLHHDCCPPIIHRDIKSSNILLDGDYESKIADFGVAKVADKGYEWSCVAGTHGYMAPELAYSFKATEKSDVYSFGVVLLELVTGLRPMEDEFGEGKDIVDYVYSQIQQDPRNLQNVLDKQVLSTYIEESMIRVLKMGLLCTTKLPNLRPSMREVVRKLDDADPCVSNSQDTTGKITV.

The N-terminal stretch at 1 to 31 (MSRRPDLLRGSVVATVAATFLLFIFPPNVES) is a signal peptide. Topologically, residues 32–620 (TVEKQALFRF…NVKRNSSLDG (589 aa)) are extracellular. The N-linked (GlcNAc...) asparagine glycan is linked to Asn85. 20 LRR repeats span residues 97-121 (LTKL…IVNC), 122-146 (KNLK…PLKS), 148-167 (EILD…WIGN), 168-192 (MNQL…SIGG), 193-217 (LKKL…IFDL), 219-241 (ALDT…ISRL), 242-265 (VNLT…IKNL), 266-288 (TRLR…ELGV), 290-312 (KELR…GFGD), 313-338 (LSHL…GRFS), 340-361 (LDTV…LCQN), 363-385 (KLQF…YGEC), 386-409 (KSLL…FWSL), 411-433 (LAKM…IGLS), 434-457 (TELS…LGRL), 458-481 (TNIE…VGDL), 482-504 (KELS…ELKN), 506-529 (VKLV…LSQI), 530-553 (ASLN…LVKL), and 555-576 (LSFI…LLAV). N-linked (GlcNAc...) asparagine glycosylation is present at Asn128. A glycan (N-linked (GlcNAc...) asparagine) is linked at Asn205. N-linked (GlcNAc...) asparagine glycans are attached at residues Asn243, Asn251, and Asn264. N-linked (GlcNAc...) asparagine glycans are attached at residues Asn301 and Asn325. N-linked (GlcNAc...) asparagine glycosylation is found at Asn469 and Asn491. An N-linked (GlcNAc...) asparagine glycan is attached at Asn615. The chain crosses the membrane as a helical span at residues 621–641 (TLLFLALAIVVVVLVSGLFAL). At 642-977 (RYRVVKIREL…SQDTTGKITV (336 aa)) the chain is on the cytoplasmic side. One can recognise a Protein kinase domain in the interval 683-965 (LDEDHVIGSG…RKLDDADPCV (283 aa)). ATP contacts are provided by residues 689–697 (IGSGSAGKV) and Lys712. Position 801 is a phosphotyrosine (Tyr801). Residue Asp814 is the Proton acceptor of the active site. Residue Ser846 is modified to Phosphoserine. Tyr854 and Tyr861 each carry phosphotyrosine.

This sequence belongs to the protein kinase superfamily. Ser/Thr protein kinase family. In terms of assembly, interacts with the root-derived peptide CEP1. Binds to the ammonium transporter AMT1-1. Expressed in mature leaves, primary roots, and the root tips of both primary and lateral roots.

The protein resides in the cell membrane. It catalyses the reaction L-tyrosyl-[protein] + ATP = O-phospho-L-tyrosyl-[protein] + ADP + H(+). Receptor kinase involved in the perception of C-terminally encoded plant signaling peptide (CEP) and subsequent regulation of root and shoot development. Together with CEPR1, mediates systemic nitrogen (N)-demand signaling upon the perception of root-derived peptides (e.g. CEP1) via the up-regulation of genes involved in N uptake and assimilation pathways. This Arabidopsis thaliana (Mouse-ear cress) protein is Receptor protein-tyrosine kinase CEPR2.